A 111-amino-acid polypeptide reads, in one-letter code: Antirepressor protein CarS (111 aa).

As to quaternary structure, monomer. Interacts with CarA and CarH.

Its function is as follows. Involved in carotenoid biosynthesis. Antagonizes the transcriptional repressor proteins CarA and CarH by preventing their binding to DNA. Can also dissociate preformed CarA-DNA complexes. Does not bind DNA. The chain is Antirepressor protein CarS (carS) from Myxococcus xanthus.